The following is a 378-amino-acid chain: Mitogen-activated protein kinase mpkC (378 aa).

Residues tyrosine 20–leucine 300 form the Protein kinase domain. ATP-binding positions include isoleucine 26–valine 34 and lysine 49. The active-site Proton acceptor is the aspartate 141. Threonine 171 bears the Phosphothreonine mark. Residues threonine 171–tyrosine 173 carry the TXY motif. Position 173 is a phosphotyrosine (tyrosine 173).

Belongs to the protein kinase superfamily. Ser/Thr protein kinase family. MAP kinase subfamily. HOG1 sub-subfamily. In terms of assembly, interacts with sakA upon osmotic and cell wall stresses. Requires Mg(2+) as cofactor. Post-translationally, dually phosphorylated on Thr-171 and Tyr-173, which activates the enzyme.

It is found in the cytoplasm. Its subcellular location is the nucleus. It carries out the reaction L-seryl-[protein] + ATP = O-phospho-L-seryl-[protein] + ADP + H(+). The catalysed reaction is L-threonyl-[protein] + ATP = O-phospho-L-threonyl-[protein] + ADP + H(+). Activated by tyrosine and threonine phosphorylation. Functionally, mitogen-activated protein kinase; part of an osmotic and general signal pathways involved in regulation of the response to the cell wall damage, oxidative stress, drug resistance, and establishment of infection. Required for growth on media where sorbitol or mannitol is the sole carbon source. With sakA, plays a redundant or cooperative role in the conidial stress resistance. Also plays a supportive role in osmotic stress adaptation when sakA is deficient. Involved in paradoxical growth, the cell wall integrity (CWI) pathway and biofilm formation. Acts by modulating sakA activity upon exposure to several types o stresses and during cell wall biosynthesis. Also collaborates with sakA to allow ful virulence in a neutropenic murine model of invasive pulmonary aspergillosis. MpkC and sakA have both independent and collaborative functions during the transcriptional response to transient osmotic stress, and mpkC plays a major role in the modulation of the response to DNA metabolism while activating mitochondrial functions and cation transport. The chain is Mitogen-activated protein kinase mpkC (mpkC) from Aspergillus fumigatus (strain ATCC MYA-4609 / CBS 101355 / FGSC A1100 / Af293) (Neosartorya fumigata).